The following is a 404-amino-acid chain: Serine/threonine transporter SstT (404 aa).

Helical transmembrane passes span 17–37, 39–59, 75–95, 138–158, 179–199, 212–232, 287–307, and 313–333; these read IGIGVVIGVMLGILAPDLTGF, ILGKLFVGGLKAIAPLLVFAL, MTLIIVLYLFGTFASALVAVL, ALATANYIGVLSWAIIFGLAL, IVVWIINLAPIGIMSLVFTTI, FLILVLVGTMLFVALVVNPLI, IPLGATINMGGAAITINVLTL, and FGIPIDFLTALLLSVVAAVSA.

Belongs to the dicarboxylate/amino acid:cation symporter (DAACS) (TC 2.A.23) family.

Its subcellular location is the cell membrane. It catalyses the reaction L-serine(in) + Na(+)(in) = L-serine(out) + Na(+)(out). The enzyme catalyses L-threonine(in) + Na(+)(in) = L-threonine(out) + Na(+)(out). In terms of biological role, involved in the import of serine and threonine into the cell, with the concomitant import of sodium (symport system). In Streptococcus pyogenes serotype M1, this protein is Serine/threonine transporter SstT.